The sequence spans 157 residues: Protein Smg (157 aa).

Belongs to the Smg family.

The polypeptide is Protein Smg (Sodalis glossinidius (strain morsitans)).